A 360-amino-acid chain; its full sequence is Transcription elongation factor, mitochondrial (360 aa).

A mitochondrion-targeting transit peptide spans 1 to 35 (MSGSVLFTAGERWRCFLTPSRSSLYWALHNFCCRK).

Belongs to the TEFM family. In terms of assembly, interacts with POLRMT.

The protein localises to the mitochondrion matrix. It is found in the mitochondrion nucleoid. Its function is as follows. Transcription elongation factor which increases mitochondrial RNA polymerase processivity. Regulates transcription of the mitochondrial genome, including genes important for the oxidative phosphorylation machinery. This is Transcription elongation factor, mitochondrial (TEFM) from Homo sapiens (Human).